We begin with the raw amino-acid sequence, 287 residues long: MTILVLGGRGKTASRLAALLDAAKTPFLVGSSSTSQESPYNSSHFNWYEKTTWDNPFAEIGKHGLQPISAVYLVGPPTMDMVPPMIQFVDLACSKGVQRFVLVSASNIEKGDHSMGQVHAYLDSLPGVEYVALRPTWFMENLLEDPQRTWIKNESQVVSATGEGKIPFISADDIASVAFHCLTEWGSHKTEYIIQGPELLSYGQVAEILTSILGKKITHRSLSEAEYTNILVDEIGMPADFAAMSAAMEVDVKNSPQETLNGSVEEVTGNPPRFFRTFAEHEKQKWV.

Belongs to the fgaFS/easG family.

The catalysed reaction is festuclavine + NAD(+) = 6,8-dimethyl-6,7-didehydroergoline + NADH + H(+). The protein operates within alkaloid biosynthesis; ergot alkaloid biosynthesis. Festuclavine synthase; part of the gene cluster that mediates the biosynthesis of isofumigaclavines, fungal ergot alkaloids. The tryptophan dimethylallyltransferase ifgA catalyzes the first step of ergot alkaloid biosynthesis by condensing dimethylallyl diphosphate (DMAP) and tryptophan to form 4-dimethylallyl-L-tryptophan. The second step is catalyzed by the methyltransferase ifgB that methylates 4-dimethylallyl-L-tryptophan in the presence of S-adenosyl-L-methionine, resulting in the formation of N-methyl-dimethylallyl-L-tryptophan. The catalase ifgD and the FAD-dependent oxidoreductase ifgC then transform N-methyl-dimethylallyl-L-tryptophan to chanoclavine-I which is further oxidized by ifgE in the presence of NAD(+), resulting in the formation of chanoclavine-I aldehyde. The chanoclavine-I aldehyde reductases ifgG and/or fgaOx3 reduce chanoclavine-I aldehyde to dihydrochanoclavine-I aldehyde that spontaneously dehydrates to form 6,8-dimethyl-6,7-didehydroergoline. The festuclavine dehydrogenases ifgF1 and/or ifgF2 then catalyze the reduction of 6,8-dimethyl-6,7-didehydroergoline to form festuclavine. Hydrolysis of festuclavine by a yet undetermined cytochrome P450 monooxygenase (called ifgH) then leads to the formation of isofumigaclavine B which is in turn acetylated by ifgI to isofumigaclavine A. Penicillium roqueforti has interestingly at least two sets of genes for the consumption of chanoclavine-I aldehyde on three different loci, the OYEs ifgG/fgaOx3 and the festuclavine synthase homologs ifgF1/ifgF2. The reason for the duplication of these genes is unclear, probably to ensure the conversion of chanoclavine-I aldehyde by differential gene expression under various environmental conditions. The polypeptide is Festuclavine synthase I (Penicillium roqueforti (strain FM164)).